The following is a 421-amino-acid chain: MSQNKAFSTPFILAVLCIYFSYFLHGISVITLAQNMSSLAEKFSTDNAGIAYLISGIGLGRLISILFFGVISDKFGRRAVILMAVIMYLLFFFGIPACPNLTLAYGLAVCVGIANSALDTGGYPALMECFPKASGSAVILVKAMVSFGQMFYPMLVSYMLLNNIWYGYGLIIPGILFVLITLMLLKSKFPSQLVDASVTNELPQMNSKPLVWLEGVSSVLFGVAAFSTFYVIVVWMPKYAMAFAGMSEAEALKTISYYSMGSLVCVFIFAALLKKMVRPIWANVFNSALATITAAIIYLYPSPLVCNAGAFVIGFSAAGGILQLGVSVMSEFFPKSKAKVTSIYMMMGGLANFVIPLITGYLSNIGLQYIIVLDFTFALLALITAIIVFIRYYRVFIIPENDVRFGERKFCTRLNTIKHRG.

Residues 1 to 9 (MSQNKAFST) are Cytoplasmic-facing. The helical transmembrane segment at 10 to 30 (PFILAVLCIYFSYFLHGISVI) threads the bilayer. Residues 31–49 (TLAQNMSSLAEKFSTDNAG) lie on the Periplasmic side of the membrane. A helical transmembrane segment spans residues 50 to 70 (IAYLISGIGLGRLISILFFGV). Residues 71–78 (ISDKFGRR) lie on the Cytoplasmic side of the membrane. The chain crosses the membrane as a helical span at residues 79–99 (AVILMAVIMYLLFFFGIPACP). Residue Asn100 is a topological domain, periplasmic. A helical transmembrane segment spans residues 101-121 (LTLAYGLAVCVGIANSALDTG). The Cytoplasmic segment spans residues 122-136 (GYPALMECFPKASGS). The chain crosses the membrane as a helical span at residues 137 to 157 (AVILVKAMVSFGQMFYPMLVS). Over 158 to 163 (YMLLNN) the chain is Periplasmic. A helical membrane pass occupies residues 164–184 (IWYGYGLIIPGILFVLITLML). Residues 185–215 (LKSKFPSQLVDASVTNELPQMNSKPLVWLEG) lie on the Cytoplasmic side of the membrane. A helical membrane pass occupies residues 216–236 (VSSVLFGVAAFSTFYVIVVWM). Residues 237–251 (PKYAMAFAGMSEAEA) lie on the Periplasmic side of the membrane. Residues 252–272 (LKTISYYSMGSLVCVFIFAAL) traverse the membrane as a helical segment. The Cytoplasmic segment spans residues 273-279 (LKKMVRP). The helical transmembrane segment at 280-300 (IWANVFNSALATITAAIIYLY) threads the bilayer. The Periplasmic segment spans residues 301–308 (PSPLVCNA). Residues 309-329 (GAFVIGFSAAGGILQLGVSVM) form a helical membrane-spanning segment. Over 330-342 (SEFFPKSKAKVTS) the chain is Cytoplasmic. Residues 343–363 (IYMMMGGLANFVIPLITGYLS) form a helical membrane-spanning segment. Residues 364–369 (NIGLQY) lie on the Periplasmic side of the membrane. A helical membrane pass occupies residues 370-390 (IIVLDFTFALLALITAIIVFI). Residues 391-421 (RYYRVFIIPENDVRFGERKFCTRLNTIKHRG) lie on the Cytoplasmic side of the membrane.

This sequence belongs to the major facilitator superfamily.

It is found in the cell inner membrane. This chain is Inner membrane transport protein YdiN (ydiN), found in Escherichia coli (strain K12).